The sequence spans 106 residues: Cytochrome c3 (106 aa).

16 residues coordinate heme c: His26, His29, Cys34, Cys37, His38, His39, Cys50, Cys55, His56, His75, Cys82, Cys85, His86, Cys98, Cys101, and His102.

Post-translationally, binds 4 heme c groups per subunit.

Its function is as follows. Participates in sulfate respiration coupled with phosphorylation by transferring electrons from the enzyme dehydrogenase to ferredoxin. This Maridesulfovibrio salexigens (Desulfovibrio salexigens) protein is Cytochrome c3.